A 268-amino-acid polypeptide reads, in one-letter code: Protein CDV3 homolog (268 aa).

Positions Lys-40–Glu-50 are enriched in basic and acidic residues. 2 disordered regions span residues Lys-40–Gly-145 and Gln-184–Ser-268. Low complexity predominate over residues Ala-51–Glu-61. Residues Val-76–Glu-85 show a composition bias toward acidic residues. Residues Gln-98 to Ser-107 are compositionally biased toward polar residues. The span at Asn-123–Asn-132 shows a compositional bias: acidic residues. Residues Arg-221–His-239 are compositionally biased toward basic and acidic residues.

This sequence belongs to the CDV3 family.

The protein is Protein CDV3 homolog of Drosophila yakuba (Fruit fly).